A 20-amino-acid polypeptide reads, in one-letter code: Beta-fibrinogenase jerdofibrase (20 aa).

The region spanning 1 to 20 (VIGGDECNINEHPFLVLVYY) is the Peptidase S1 domain.

It belongs to the peptidase S1 family. Snake venom subfamily. As to quaternary structure, monomer. Expressed by the venom gland.

Its subcellular location is the secreted. Its activity is regulated as follows. Inhibited by PMSF and soybean trypsin inhibitor. Partially inhibited by DTT and cysteine. Not affected by EDTA. Functionally, fibrin(ogen)olytic serine protease degrades Bbeta-chain of human fibrinogen (FGB) and shows a lower activity on Aa-chain (FGA). Also degrades fibrin directly. Releases fibrinopeptide B and a small amount of fibrinopeptide A. Has also be shown to catalyze the hydrolysis of some chromogenic substrates such as S2238, S2160, S2302 and S2251. The protein is Beta-fibrinogenase jerdofibrase of Protobothrops jerdonii (Jerdon's pitviper).